A 150-amino-acid polypeptide reads, in one-letter code: Deoxyuridine 5'-triphosphate nucleotidohydrolase (150 aa).

Residues 68-70 (RSG), asparagine 81, 85-87 (TID), and lysine 95 each bind substrate.

It belongs to the dUTPase family. It depends on Mg(2+) as a cofactor.

The enzyme catalyses dUTP + H2O = dUMP + diphosphate + H(+). The protein operates within pyrimidine metabolism; dUMP biosynthesis; dUMP from dCTP (dUTP route): step 2/2. Its function is as follows. This enzyme is involved in nucleotide metabolism: it produces dUMP, the immediate precursor of thymidine nucleotides and it decreases the intracellular concentration of dUTP so that uracil cannot be incorporated into DNA. This chain is Deoxyuridine 5'-triphosphate nucleotidohydrolase, found in Rickettsia bellii (strain OSU 85-389).